The primary structure comprises 403 residues: Phosphopentomutase (403 aa).

Mn(2+)-binding residues include Asp13, Asp298, His303, Asp339, His340, and His351.

This sequence belongs to the phosphopentomutase family. Requires Mn(2+) as cofactor.

The protein resides in the cytoplasm. It carries out the reaction 2-deoxy-alpha-D-ribose 1-phosphate = 2-deoxy-D-ribose 5-phosphate. The catalysed reaction is alpha-D-ribose 1-phosphate = D-ribose 5-phosphate. It participates in carbohydrate degradation; 2-deoxy-D-ribose 1-phosphate degradation; D-glyceraldehyde 3-phosphate and acetaldehyde from 2-deoxy-alpha-D-ribose 1-phosphate: step 1/2. Functionally, isomerase that catalyzes the conversion of deoxy-ribose 1-phosphate (dRib-1-P) and ribose 1-phosphate (Rib-1-P) to deoxy-ribose 5-phosphate (dRib-5-P) and ribose 5-phosphate (Rib-5-P), respectively. The chain is Phosphopentomutase from Streptococcus uberis (strain ATCC BAA-854 / 0140J).